A 695-amino-acid polypeptide reads, in one-letter code: Probable glutamine--tRNA ligase (695 aa).

A 'HIGH' region motif is present at residues 201–211 (PEPNGILHIGH). ATP is bound by residues 202-204 (EPN) and 208-214 (HIGHAKA). L-glutamine-binding residues include aspartate 234 and tyrosine 391. Residues threonine 410, 439 to 440 (RL), and 447 to 449 (LSK) contribute to the ATP site. The short motif at 446–450 (VLSKR) is the 'KMSKS' region element.

It belongs to the class-I aminoacyl-tRNA synthetase family.

The catalysed reaction is tRNA(Gln) + L-glutamine + ATP = L-glutaminyl-tRNA(Gln) + AMP + diphosphate. The polypeptide is Probable glutamine--tRNA ligase (Vairimorpha ceranae (strain BRL01) (Microsporidian parasite)).